The sequence spans 312 residues: DNA-directed RNA polymerase subunit alpha (312 aa).

Positions 1 to 229 (MLQYQIDRIE…ELFQPLATVT (229 aa)) are alpha N-terminal domain (alpha-NTD). The alpha C-terminal domain (alpha-CTD) stretch occupies residues 236 to 312 (IEPEPSAEAQ…ISIPQSRTSV (77 aa)).

The protein belongs to the RNA polymerase alpha chain family. As to quaternary structure, in cyanobacteria the RNAP catalytic core is composed of 2 alpha, 1 beta, 1 beta', 1 gamma and 1 omega subunit. When a sigma factor is associated with the core the holoenzyme is formed, which can initiate transcription.

It catalyses the reaction RNA(n) + a ribonucleoside 5'-triphosphate = RNA(n+1) + diphosphate. Functionally, DNA-dependent RNA polymerase catalyzes the transcription of DNA into RNA using the four ribonucleoside triphosphates as substrates. In Synechococcus sp. (strain CC9311), this protein is DNA-directed RNA polymerase subunit alpha.